Reading from the N-terminus, the 476-residue chain is Methylenetetrahydrofolate--tRNA-(uracil-5-)-methyltransferase TrmFO (476 aa).

Residue 14–19 (GGGLAG) coordinates FAD.

Belongs to the MnmG family. TrmFO subfamily. It depends on FAD as a cofactor.

It is found in the cytoplasm. It carries out the reaction uridine(54) in tRNA + (6R)-5,10-methylene-5,6,7,8-tetrahydrofolate + NADH + H(+) = 5-methyluridine(54) in tRNA + (6S)-5,6,7,8-tetrahydrofolate + NAD(+). The catalysed reaction is uridine(54) in tRNA + (6R)-5,10-methylene-5,6,7,8-tetrahydrofolate + NADPH + H(+) = 5-methyluridine(54) in tRNA + (6S)-5,6,7,8-tetrahydrofolate + NADP(+). Its function is as follows. Catalyzes the folate-dependent formation of 5-methyl-uridine at position 54 (M-5-U54) in all tRNAs. This Brucella anthropi (strain ATCC 49188 / DSM 6882 / CCUG 24695 / JCM 21032 / LMG 3331 / NBRC 15819 / NCTC 12168 / Alc 37) (Ochrobactrum anthropi) protein is Methylenetetrahydrofolate--tRNA-(uracil-5-)-methyltransferase TrmFO.